The following is a 340-amino-acid chain: Heat-inducible transcription repressor HrcA (340 aa).

The protein belongs to the HrcA family.

Functionally, negative regulator of class I heat shock genes (grpE-dnaK-dnaJ and groELS operons). Prevents heat-shock induction of these operons. The protein is Heat-inducible transcription repressor HrcA of Burkholderia cenocepacia (strain ATCC BAA-245 / DSM 16553 / LMG 16656 / NCTC 13227 / J2315 / CF5610) (Burkholderia cepacia (strain J2315)).